The chain runs to 108 residues: MERWDPLTWHCIISSYYFYIFWNFFLPMFIVYRGFGLLDPFAVKGRYTSDCYIFLLSEEPFENVTHCSSQRQSWALWSSHQRISRLQRLTTEHHKANRGQATIRKTLA.

A helical membrane pass occupies residues 15–37 (SYYFYIFWNFFLPMFIVYRGFGL).

The protein resides in the membrane. This is an uncharacterized protein from Archaeoglobus fulgidus (strain ATCC 49558 / DSM 4304 / JCM 9628 / NBRC 100126 / VC-16).